Consider the following 164-residue polypeptide: Large ribosomal subunit protein uL11 (164 aa).

This sequence belongs to the universal ribosomal protein uL11 family. In terms of assembly, part of the ribosomal stalk of the 50S ribosomal subunit. Interacts with L10 and the large rRNA to form the base of the stalk. L10 forms an elongated spine to which L12 dimers bind in a sequential fashion forming a multimeric L10(L12)X complex.

Functionally, forms part of the ribosomal stalk which helps the ribosome interact with GTP-bound translation factors. In Pyrococcus furiosus (strain ATCC 43587 / DSM 3638 / JCM 8422 / Vc1), this protein is Large ribosomal subunit protein uL11.